Here is a 401-residue protein sequence, read N- to C-terminus: MPTIMNCKHLGICGGCSSPQSAYADSLKAKEQILHELFAPIFPPSEILPVIPCDPVLRGRNKMEFSFFQTKEGKKSLGFITPTKPKQGVPITECLMIHEDTMDILNLTRAWWDNHPELTAYYPPFNKGSLCTLTVRIGSPERKLMVILTTSAREEYAVEKGIIEEWKNALINSSLPIVSIIWEEKVSAKNAPTYFRSHLIHGEPFIKQTLTLPKDGNSGVFHVRPRSFFQPQSLQGAKIIEIAKEFMNPQGSETLLDLYCGAGTIGIMLSAYVKKVIGVEIVPDAIDSAKENILINKKENLIEVYLEDAKTFCRRHQDCPPPDVVVIDPPRCGIQNKVLKYLLRIFPKKIIYISCNPKIQFEECCSLISAGYHIKKVQPLDQFPHSPHLENIILLEREDSL.

Residues C7, C13, C16, and C94 each coordinate [4Fe-4S] cluster. S-adenosyl-L-methionine contacts are provided by Q230, Y259, E280, and D328. Catalysis depends on C355, which acts as the Nucleophile.

This sequence belongs to the class I-like SAM-binding methyltransferase superfamily. RNA M5U methyltransferase family.

This is an uncharacterized protein from Chlamydia caviae (strain ATCC VR-813 / DSM 19441 / 03DC25 / GPIC) (Chlamydophila caviae).